A 347-amino-acid polypeptide reads, in one-letter code: Quinolinate synthase (347 aa).

Iminosuccinate-binding residues include H47 and S68. C113 lines the [4Fe-4S] cluster pocket. Residues 139–141 and S156 each bind iminosuccinate; that span reads YAN. Position 200 (C200) interacts with [4Fe-4S] cluster. Iminosuccinate contacts are provided by residues 226–228 and T243; that span reads HPE. C297 serves as a coordination point for [4Fe-4S] cluster.

This sequence belongs to the quinolinate synthase family. Type 1 subfamily. [4Fe-4S] cluster serves as cofactor.

The protein localises to the cytoplasm. The catalysed reaction is iminosuccinate + dihydroxyacetone phosphate = quinolinate + phosphate + 2 H2O + H(+). It functions in the pathway cofactor biosynthesis; NAD(+) biosynthesis; quinolinate from iminoaspartate: step 1/1. Catalyzes the condensation of iminoaspartate with dihydroxyacetone phosphate to form quinolinate. In Escherichia coli O7:K1 (strain IAI39 / ExPEC), this protein is Quinolinate synthase.